The following is a 325-amino-acid chain: Brain mitochondrial carrier protein 1 (325 aa).

Helical transmembrane passes span Gly38–Ala54, Leu112–Leu128, Leu141–Pro161, Gly199–Leu215, Val240–Val256, and Gly298–Ile315. 3 Solcar repeats span residues Lys42–Leu131, Glu139–His224, and Asp233–Leu323.

The protein belongs to the mitochondrial carrier (TC 2.A.29) family. As to quaternary structure, homotetramer. In terms of tissue distribution, mainly expressed in brain. Some expression in testis and pituitary.

The protein resides in the mitochondrion inner membrane. The catalysed reaction is sulfite(in) + sulfate(out) = sulfite(out) + sulfate(in). The enzyme catalyses thiosulfate(in) + sulfate(out) = thiosulfate(out) + sulfate(in). It catalyses the reaction sulfate(out) + phosphate(in) = sulfate(in) + phosphate(out). It carries out the reaction oxalate(in) + sulfate(out) = oxalate(out) + sulfate(in). The catalysed reaction is malonate(in) + sulfate(out) = malonate(out) + sulfate(in). The enzyme catalyses maleate(in) + sulfate(out) = maleate(out) + sulfate(in). It catalyses the reaction (S)-malate(in) + sulfate(out) = (S)-malate(out) + sulfate(in). It carries out the reaction (3S)-citramalate(in) + sulfate(out) = (3S)-citramalate(out) + sulfate(in). The catalysed reaction is (3R)-citramalate(in) + sulfate(out) = (3R)-citramalate(out) + sulfate(in). The enzyme catalyses sulfate(out) + succinate(in) = sulfate(in) + succinate(out). It catalyses the reaction (S,S)-tartrate(in) + sulfate(out) = (S,S)-tartrate(out) + sulfate(in). It carries out the reaction (2R,3R)-tartrate(in) + sulfate(out) = (2R,3R)-tartrate(out) + sulfate(in). The catalysed reaction is D-aspartate(in) + sulfate(out) = D-aspartate(out) + sulfate(in). The enzyme catalyses L-aspartate(in) + sulfate(out) = L-aspartate(out) + sulfate(in). It catalyses the reaction sulfate(in) = sulfate(out). It carries out the reaction phosphate(in) = phosphate(out). The catalysed reaction is (S)-malate(out) = (S)-malate(in). The enzyme catalyses citrate(in) = citrate(out). It catalyses the reaction L-aspartate(out) = L-aspartate(in). It carries out the reaction L-glutamate(out) = L-glutamate(in). The catalysed reaction is H(+)(in) = H(+)(out). The enzyme catalyses chloride(in) = chloride(out). With respect to regulation, increased activity at pH lower than 8.0. sulfate/sulfate exchange activity is inhibited strongly by pyridoxal 5'-phosphate, bathophenanthroline and the organic mercurials mersalyl, p-chloromercuribenzoate and HgCl2. Proton conductance is activated by cardiolipin and long-chain free fatty acids and inhibited by purine nucleotides ATP and ADP. Chloride ion transporter activity is inhibited by long-chain free fatty acids. Transports inorganic anions (sulfate, sulfite, thiosulfate and phosphate) and, to a lesser extent, a variety of dicarboxylates (e.g. malonate, malate and citramalate) and, even more so, aspartate and glutamate and tricarboxylates. May catalyze the export of sulfite and thiosulfate (the hydrogen sulfide degradation products) from the mitochondria, thereby modulating the level of the hydrogen sulfide. Also can mediate a very low unidirectional transport of anions including sulfate, phosphate, (S)-malate, citrate, L-aspartate and L-glutamate. Maintains oxidative balance (through uncoupling activities) and ATP production (by modifying mitochondrial membrane potential). Is able to transport protons across lipid membranes. Also exhibits transmembrane chloride transport activity to a lesser extent. May modify mitochondrial respiratory efficiency and mitochondrial oxidant production. This chain is Brain mitochondrial carrier protein 1, found in Homo sapiens (Human).